Reading from the N-terminus, the 288-residue chain is Transmembrane and coiled-coil domain-containing protein 5A (288 aa).

Residues I13–K105 adopt a coiled-coil conformation. Residues S227 to I249 form a helical membrane-spanning segment.

In terms of tissue distribution, testis-specific. Expressed in spermatogenic cells of testis but disappear by the time mature spermatozoa are formed (at protein level).

It is found in the endoplasmic reticulum membrane. It localises to the nucleus membrane. The protein is Transmembrane and coiled-coil domain-containing protein 5A (Tmco5a) of Rattus norvegicus (Rat).